Here is a 266-residue protein sequence, read N- to C-terminus: Maltodextrose utilization protein MalA (266 aa).

In terms of biological role, has a role in maltotetraose utilization. The chain is Maltodextrose utilization protein MalA (malA) from Streptococcus pneumoniae (strain ATCC BAA-255 / R6).